The chain runs to 77 residues: Acyl carrier protein (77 aa).

The region spanning Ser2 to Ser77 is the Carrier domain. Ser37 bears the O-(pantetheine 4'-phosphoryl)serine mark.

It belongs to the acyl carrier protein (ACP) family. In terms of processing, 4'-phosphopantetheine is transferred from CoA to a specific serine of apo-ACP by AcpS. This modification is essential for activity because fatty acids are bound in thioester linkage to the sulfhydryl of the prosthetic group.

It localises to the cytoplasm. It participates in lipid metabolism; fatty acid biosynthesis. In terms of biological role, carrier of the growing fatty acid chain in fatty acid biosynthesis. This is Acyl carrier protein from Desulforudis audaxviator (strain MP104C).